The following is a 235-amino-acid chain: Purine nucleoside phosphorylase DeoD-type (235 aa).

His4 provides a ligand contact to a purine D-ribonucleoside. Residues Gly20, Arg24, Arg43, and Arg87 to Thr90 each bind phosphate. Residues Glu179–Glu181 and Ser203–Asp204 each bind a purine D-ribonucleoside. Residue Asp204 is the Proton donor of the active site.

This sequence belongs to the PNP/UDP phosphorylase family. As to quaternary structure, homohexamer; trimer of homodimers.

The enzyme catalyses a purine D-ribonucleoside + phosphate = a purine nucleobase + alpha-D-ribose 1-phosphate. It carries out the reaction a purine 2'-deoxy-D-ribonucleoside + phosphate = a purine nucleobase + 2-deoxy-alpha-D-ribose 1-phosphate. Its function is as follows. Catalyzes the reversible phosphorolytic breakdown of the N-glycosidic bond in the beta-(deoxy)ribonucleoside molecules, with the formation of the corresponding free purine bases and pentose-1-phosphate. The polypeptide is Purine nucleoside phosphorylase DeoD-type (Exiguobacterium sibiricum (strain DSM 17290 / CCUG 55495 / CIP 109462 / JCM 13490 / 255-15)).